Here is a 635-residue protein sequence, read N- to C-terminus: Threonine--tRNA ligase (635 aa).

In terms of domain architecture, TGS spans 1–61 (MVSIRLPDGS…DRDASLAIVT (61 aa)). The tract at residues 242 to 533 (DHRKLGKQLD…LIEHHAGAMP (292 aa)) is catalytic. The Zn(2+) site is built by C333, H384, and H510.

The protein belongs to the class-II aminoacyl-tRNA synthetase family. In terms of assembly, homodimer. It depends on Zn(2+) as a cofactor.

It is found in the cytoplasm. It catalyses the reaction tRNA(Thr) + L-threonine + ATP = L-threonyl-tRNA(Thr) + AMP + diphosphate + H(+). Functionally, catalyzes the attachment of threonine to tRNA(Thr) in a two-step reaction: L-threonine is first activated by ATP to form Thr-AMP and then transferred to the acceptor end of tRNA(Thr). Also edits incorrectly charged L-seryl-tRNA(Thr). The polypeptide is Threonine--tRNA ligase (Burkholderia orbicola (strain MC0-3)).